A 437-amino-acid polypeptide reads, in one-letter code: Exosome complex component RRP45 (437 aa).

Ser65 carries the post-translational modification Phosphoserine. Residue Lys297 is modified to N6-acetyllysine; alternate. Lys297 is covalently cross-linked (Glycyl lysine isopeptide (Lys-Gly) (interchain with G-Cter in SUMO1); alternate). Lys297 participates in a covalent cross-link: Glycyl lysine isopeptide (Lys-Gly) (interchain with G-Cter in SUMO2); alternate. Residues Ser306 and Ser346 each carry the phosphoserine modification. A disordered region spans residues 339-437; the sequence is IGEGIENSWG…KRRKKKRTAN (99 aa). Positions 349–363 are enriched in acidic residues; that stretch reads DLEDSEKEEEEEGGI. Phosphoserine is present on residues Ser392, Ser394, and Ser407. The segment covering 413 to 425 has biased composition (polar residues); it reads AQTSANQKAPSKS. Positions 426-437 are enriched in basic residues; the sequence is QGKRRKKKRTAN.

The protein belongs to the RNase PH family. Component of the RNA exosome core complex (Exo-9), composed of EXOSC1, EXOSC2, EXOSC3, EXOSC4, EXOSC5, EXOSC6, EXOSC7, EXOSC8 and EXOSC9; within the complex interacts with EXOSC3, EXOSC4, EXOSC5 and DIS3. The catalytically inactive RNA exosome core complex (Exo-9) associates with the catalytic subunit EXOSC10/RRP6. Exo-9 may associate with DIS3 to form the nucleolar exosome complex, or DIS3L to form the cytoplasmic exosome complex. Exo-9 is formed by a hexameric base ring consisting of the heterodimers EXOSC4-EXOSC9, EXOSC5-EXOSC8 and EXOSC6-EXOSC7, and a cap ring consisting of EXOSC1, EXOSC2 and EXOSC3. The RNA exosome complex associates with cofactors C1D/RRP47, MPHOSPH6/MPP6 and MTREX/MTR4. Interacts (via C-terminus region) with SETX (via N-terminus domain); the interaction enhances SETX sumoylation. Interacts with DIS3; the interaction is direct.

The protein resides in the cytoplasm. It localises to the nucleus. Its subcellular location is the nucleolus. It is found in the nucleoplasm. In terms of biological role, non-catalytic component of the RNA exosome complex which has 3'-&gt;5' exoribonuclease activity and participates in a multitude of cellular RNA processing and degradation events. In the nucleus, the RNA exosome complex is involved in proper maturation of stable RNA species such as rRNA, snRNA and snoRNA, in the elimination of RNA processing by-products and non-coding 'pervasive' transcripts, such as antisense RNA species and promoter-upstream transcripts (PROMPTs), and of mRNAs with processing defects, thereby limiting or excluding their export to the cytoplasm. The RNA exosome may be involved in Ig class switch recombination (CSR) and/or Ig variable region somatic hypermutation (SHM) by targeting AICDA deamination activity to transcribed dsDNA substrates. In the cytoplasm, the RNA exosome complex is involved in general mRNA turnover and specifically degrades inherently unstable mRNAs containing AU-rich elements (AREs) within their 3' untranslated regions, and in RNA surveillance pathways, preventing translation of aberrant mRNAs. It seems to be involved in degradation of histone mRNA. The catalytic inactive RNA exosome core complex of 9 subunits (Exo-9) is proposed to play a pivotal role in the binding and presentation of RNA for ribonucleolysis, and to serve as a scaffold for the association with catalytic subunits and accessory proteins or complexes. EXOSC9 binds to ARE-containing RNAs. This is Exosome complex component RRP45 (Exosc9) from Rattus norvegicus (Rat).